A 264-amino-acid chain; its full sequence is uncharacterized protein (264 aa).

Helical transmembrane passes span 48–68, 112–132, and 142–162; these read LTITLLYLHPVSFSAILLLVF, ITPSAISSGLLVSLVLIFLLA, and LPIAIWIGLISLHPKLRSYLI. Position 260 is a phosphoserine (serine 260).

Its subcellular location is the membrane. This is an uncharacterized protein from Schizosaccharomyces pombe (strain 972 / ATCC 24843) (Fission yeast).